The sequence spans 687 residues: Protein 4.2 (687 aa).

Gly2 carries the N-myristoyl glycine lipid modification. A band 3 binding region spans residues 31–39 (LFVRRGQPF). A Phosphoserine modification is found at Ser247.

It belongs to the transglutaminase superfamily. Transglutaminase family. In terms of assembly, component of the ankyrin-1 complex in the erythrocyte, composed of ANK1, RHCE, RHAG, SLC4A1, EPB42, GYPA, GYPB and AQP1. Interacts with SLC4A1 (via the cytoplasmic domain); this interaction is mediated by the SLC4A1 Band 3-I dimer. Interacts with ANK1 (via ANK 1-13 repeats). Interacts with AQP1 (via the C-terminal).

The protein resides in the cell membrane. It is found in the cytoplasm. The protein localises to the cytoskeleton. Functionally, component of the ankyrin-1 complex, a multiprotein complex involved in the stability and shape of the erythrocyte membrane. This Bos taurus (Bovine) protein is Protein 4.2.